A 232-amino-acid polypeptide reads, in one-letter code: Large ribosomal subunit protein uL1 (232 aa).

This sequence belongs to the universal ribosomal protein uL1 family. In terms of assembly, part of the 50S ribosomal subunit.

Binds directly to 23S rRNA. The L1 stalk is quite mobile in the ribosome, and is involved in E site tRNA release. Its function is as follows. Protein L1 is also a translational repressor protein, it controls the translation of the L11 operon by binding to its mRNA. The polypeptide is Large ribosomal subunit protein uL1 (Amoebophilus asiaticus (strain 5a2)).